A 203-amino-acid polypeptide reads, in one-letter code: Small ribosomal subunit protein uS4 (203 aa).

Positions 93–153 (RRLDNIVYRL…DKSKNLQQVK (61 aa)) constitute an S4 RNA-binding domain.

It belongs to the universal ribosomal protein uS4 family. In terms of assembly, part of the 30S ribosomal subunit. Contacts protein S5. The interaction surface between S4 and S5 is involved in control of translational fidelity.

In terms of biological role, one of the primary rRNA binding proteins, it binds directly to 16S rRNA where it nucleates assembly of the body of the 30S subunit. Its function is as follows. With S5 and S12 plays an important role in translational accuracy. The sequence is that of Small ribosomal subunit protein uS4 from Lactobacillus gasseri (strain ATCC 33323 / DSM 20243 / BCRC 14619 / CIP 102991 / JCM 1131 / KCTC 3163 / NCIMB 11718 / NCTC 13722 / AM63).